Here is a 246-residue protein sequence, read N- to C-terminus: Large ribosomal subunit protein uL30-like 1 (246 aa).

S54 is modified (phosphoserine).

It belongs to the universal ribosomal protein uL30 family.

The chain is Large ribosomal subunit protein uL30-like 1 (Rpl7l1) from Mus musculus (Mouse).